A 590-amino-acid polypeptide reads, in one-letter code: Pescadillo homolog (590 aa).

A BRCT domain is found at 332–422 (VCKSLFKDLK…IILPTEKYLV (91 aa)). The tract at residues 561–590 (AMKISQSRKRSGVEIIEQRKKRLNDTQPSS) is disordered.

This sequence belongs to the pescadillo family. As to quaternary structure, interacts with BOP1 and WDR12. Interacts with NSN1. As to expression, expressed in shoot and root apical meristems, epidermal cells and vasculature of developing leaves, trichome progenitor cells, young flowers, developing pollen grains and ovules, and mature pollen grains.

The protein localises to the nucleus. The protein resides in the nucleolus. Its subcellular location is the nucleoplasm. In terms of biological role, required for maturation of ribosomal RNAs and formation of the large ribosomal subunit. Plays an essential role in cell growth and survival through its regulation of ribosome biogenesis and mitotic progression. Required for normal root cell growth and differentiation. This Arabidopsis thaliana (Mouse-ear cress) protein is Pescadillo homolog.